The chain runs to 149 residues: Transcriptional repressor NrdR (149 aa).

Residues 3–34 fold into a zinc finger; that stretch reads CPFCSAVDTKVIDSRLVGEGSQVRRRRQCLVC. The region spanning 49-139 is the ATP-cone domain; the sequence is PRVIKSNEVR…VYRSFEDIRE (91 aa).

It belongs to the NrdR family. The cofactor is Zn(2+).

Functionally, negatively regulates transcription of bacterial ribonucleotide reductase nrd genes and operons by binding to NrdR-boxes. The protein is Transcriptional repressor NrdR of Pectobacterium carotovorum subsp. carotovorum (strain PC1).